A 427-amino-acid polypeptide reads, in one-letter code: Beta-1,3-galactosyl-O-glycosyl-glycoprotein beta-1,6-N-acetylglucosaminyltransferase (427 aa).

Over 1-9 the chain is Cytoplasmic; sequence MLRKLWRRK. Residues 5-9 are mediates interaction with GOLPH3 and is necessary and sufficient for localization to the Golgi; that stretch reads LWRRK. Residues 10-32 form a helical; Signal-anchor for type II membrane protein membrane-spanning segment; the sequence is LFSFPTKYYFLFLAFSVVTFTVL. The segment at 33-121 is stem region; sequence RIHQKTEFVN…EPLSKEEAGF (89 aa). At 33-427 the chain is on the lumenal side; it reads RIHQKTEFVN…RHKALETLKP (395 aa). N-linked (GlcNAc...) asparagine glycans are attached at residues asparagine 58 and asparagine 95. Disulfide bonds link cysteine 59/cysteine 412, cysteine 100/cysteine 172, cysteine 151/cysteine 199, and cysteine 372/cysteine 380. The tract at residues 122 to 427 is catalytic; the sequence is PIAYSIVVHH…RHKALETLKP (306 aa). UDP-N-acetyl-alpha-D-glucosamine-binding positions include 128–130, 155–157, and tyrosine 187; these read VVH and DAK. A glycoprotein contacts are provided by glutamate 243, lysine 251, arginine 254, glutamate 320, lysine 341, and tyrosine 358. The Nucleophile role is filled by glutamate 320. UDP-N-acetyl-alpha-D-glucosamine is bound by residues arginine 377 and lysine 400.

Belongs to the glycosyltransferase 14 family. Interacts with GOLPH3; may control GCNT1 retention in the Golgi. As to expression, expressed in tracheal submucosal glands and epithelium (at protein level).

It localises to the golgi apparatus membrane. The catalysed reaction is a 3-O-[beta-D-galactosyl-(1-&gt;3)-N-acetyl-alpha-D-galactosaminyl]-L-seryl-[protein] + UDP-N-acetyl-alpha-D-glucosamine = 3-O-{beta-D-galactosyl-(1-&gt;3)-[N-acetyl-beta-D-glucosaminyl-(1-&gt;6)]-N-acetyl-alpha-D-galactosaminyl}-L-seryl-[protein] + UDP + H(+). It carries out the reaction a 3-O-[beta-D-galactosyl-(1-&gt;3)-N-acetyl-alpha-D-galactosaminyl]-L-threonyl-[protein] + UDP-N-acetyl-alpha-D-glucosamine = a 3-O-{beta-D-galactosyl-(1-&gt;3)-[N-acetyl-beta-D-glucosaminyl-(1-&gt;6)]-N-acetyl-alpha-D-galactosaminyl}-L-threonyl-[protein] + UDP + H(+). The enzyme catalyses a globoside GalGb4Cer + UDP-N-acetyl-alpha-D-glucosamine = a globoside GlcNAc-(beta1-&gt;6)-GalGb4Cer + UDP + H(+). It catalyses the reaction a ganglioside GA1 + UDP-N-acetyl-alpha-D-glucosamine = a ganglioside beta-D-GlcNAc-(1-&gt;6)-GA1 + UDP + H(+). It functions in the pathway protein modification; protein glycosylation. Its pathway is glycolipid biosynthesis. In terms of biological role, glycosyltransferase that catalyzes the transfer of an N-acetylglucosamine (GlcNAc) moiety in beta1-6 linkage from UDP-GlcNAc onto mucin-type core 1 O-glycan to form the branched mucin-type core 2 O-glycan. The catalysis is metal ion-independent and occurs with inversion of the anomeric configuration of sugar donor. Selectively involved in synthesis of mucin-type core 2 O-glycans that serve as scaffolds for the display of selectin ligand sialyl Lewis X epitope by myeloid cells, with an impact on homeostasis and recruitment to inflammatory sites. Can also act on glycolipid substrates. Transfers GlcNAc moiety to GalGb4Cer globosides in a reaction step to the synthesis of stage-specific embryonic antigen 1 (SSEA-1) determinant. Can use Galbeta1-3GalNAcalpha1- and Galbeta1-3GalNAcbeta1- oligosaccharide derivatives as acceptor substrates. In Bos taurus (Bovine), this protein is Beta-1,3-galactosyl-O-glycosyl-glycoprotein beta-1,6-N-acetylglucosaminyltransferase (GCNT1).